Consider the following 364-residue polypeptide: Aminomethyltransferase (364 aa).

It belongs to the GcvT family. In terms of assembly, the glycine cleavage system is composed of four proteins: P, T, L and H.

The enzyme catalyses N(6)-[(R)-S(8)-aminomethyldihydrolipoyl]-L-lysyl-[protein] + (6S)-5,6,7,8-tetrahydrofolate = N(6)-[(R)-dihydrolipoyl]-L-lysyl-[protein] + (6R)-5,10-methylene-5,6,7,8-tetrahydrofolate + NH4(+). Its function is as follows. The glycine cleavage system catalyzes the degradation of glycine. This Thermotoga sp. (strain RQ2) protein is Aminomethyltransferase.